We begin with the raw amino-acid sequence, 72 residues long: Translation initiation factor IF-1 (72 aa).

An S1-like domain is found at 1–72; sequence MTKEEVLEFP…TKGRITYRFK (72 aa).

It belongs to the IF-1 family. In terms of assembly, component of the 30S ribosomal translation pre-initiation complex which assembles on the 30S ribosome in the order IF-2 and IF-3, IF-1 and N-formylmethionyl-tRNA(fMet); mRNA recruitment can occur at any time during PIC assembly.

Its subcellular location is the cytoplasm. In terms of biological role, one of the essential components for the initiation of protein synthesis. Stabilizes the binding of IF-2 and IF-3 on the 30S subunit to which N-formylmethionyl-tRNA(fMet) subsequently binds. Helps modulate mRNA selection, yielding the 30S pre-initiation complex (PIC). Upon addition of the 50S ribosomal subunit IF-1, IF-2 and IF-3 are released leaving the mature 70S translation initiation complex. In Agrobacterium fabrum (strain C58 / ATCC 33970) (Agrobacterium tumefaciens (strain C58)), this protein is Translation initiation factor IF-1.